A 104-amino-acid chain; its full sequence is MTNRLELSGIICRTPLRKVSPSGIPHCQFVLEHRSVQEEAGFHRQAWCQMPVIISGHENQAITHSITVGSAVTVRGFISCHKAKNGLSKMVLHAEQIELIDSGD.

The SSB domain occupies methionine 1–aspartate 101.

This sequence belongs to the PriB family. In terms of assembly, homodimer. Interacts with DnaT. Interacts with PriA. Component of the replication restart primosome. Primosome assembly occurs via a 'hand-off' mechanism. PriA binds to replication forks, subsequently PriB then DnaT bind; DnaT then displaces ssDNA to generate the helicase loading substrate.

Functionally, involved in the restart of stalled replication forks, which reloads the replicative helicase on sites far from the origin of replication; the PriA-PriB pathway is the major replication restart pathway. During primosome assembly it facilitates complex formation between PriA and DnaT on DNA; stabilizes PriA on DNA. Stimulates the DNA unwinding activity of PriA helicase. Its function is as follows. Binds single-stranded (ss)DNA at the primosome assembly site (PAS). One study finds it binds 15 nucleotide (nt) ssDNA. Another study finds the minimal ssDNA length for binding to PriB is 25 nt; prefers dT(30) over dA(30). Also binds 22 nt dsDNA. In Klebsiella pneumoniae subsp. pneumoniae (strain ATCC 700721 / MGH 78578), this protein is Replication restart protein PriB.